We begin with the raw amino-acid sequence, 180 residues long: Large ribosomal subunit protein uL5 (180 aa).

The protein belongs to the universal ribosomal protein uL5 family. Part of the 50S ribosomal subunit; part of the 5S rRNA/L5/L18/L25 subcomplex. Contacts the 5S rRNA and the P site tRNA. Forms a bridge to the 30S subunit in the 70S ribosome.

In terms of biological role, this is one of the proteins that bind and probably mediate the attachment of the 5S RNA into the large ribosomal subunit, where it forms part of the central protuberance. In the 70S ribosome it contacts protein S13 of the 30S subunit (bridge B1b), connecting the 2 subunits; this bridge is implicated in subunit movement. Contacts the P site tRNA; the 5S rRNA and some of its associated proteins might help stabilize positioning of ribosome-bound tRNAs. In Stenotrophomonas maltophilia (strain K279a), this protein is Large ribosomal subunit protein uL5.